Reading from the N-terminus, the 181-residue chain is Ribulose bisphosphate carboxylase small subunit, chloroplastic 6 (181 aa).

The N-terminal 57 residues, 1-57 (MASSIVSSAAVATRSNVAQASMVAPFTGLKSAASFPVTKKNNNVDITSLASNGGRVR), are a transit peptide targeting the chloroplast.

Belongs to the RuBisCO small chain family. In terms of assembly, heterohexadecamer of 8 large and 8 small subunits.

The protein resides in the plastid. The protein localises to the chloroplast. RuBisCO catalyzes two reactions: the carboxylation of D-ribulose 1,5-bisphosphate, the primary event in carbon dioxide fixation, as well as the oxidative fragmentation of the pentose substrate. Both reactions occur simultaneously and in competition at the same active site. Although the small subunit is not catalytic it is essential for maximal activity. The polypeptide is Ribulose bisphosphate carboxylase small subunit, chloroplastic 6 (Solanum tuberosum (Potato)).